A 169-amino-acid polypeptide reads, in one-letter code: S-ribosylhomocysteine lyase (169 aa).

Residues H54, H58, and C129 each contribute to the Fe cation site.

Belongs to the LuxS family. Homodimer. Requires Fe cation as cofactor.

The catalysed reaction is S-(5-deoxy-D-ribos-5-yl)-L-homocysteine = (S)-4,5-dihydroxypentane-2,3-dione + L-homocysteine. Functionally, involved in the synthesis of autoinducer 2 (AI-2) which is secreted by bacteria and is used to communicate both the cell density and the metabolic potential of the environment. The regulation of gene expression in response to changes in cell density is called quorum sensing. Catalyzes the transformation of S-ribosylhomocysteine (RHC) to homocysteine (HC) and 4,5-dihydroxy-2,3-pentadione (DPD). The polypeptide is S-ribosylhomocysteine lyase (Actinobacillus pleuropneumoniae serotype 5b (strain L20)).